We begin with the raw amino-acid sequence, 332 residues long: Glycerol-3-phosphate dehydrogenase [NAD(P)+] (332 aa).

Trp-13, Lys-34, and Lys-108 together coordinate NADPH. Residues Lys-108, Gly-136, and Ser-138 each contribute to the sn-glycerol 3-phosphate site. Ala-140 lines the NADPH pocket. Lys-191, Asp-244, Ser-254, Arg-255, and Asn-256 together coordinate sn-glycerol 3-phosphate. The active-site Proton acceptor is Lys-191. Arg-255 contributes to the NADPH binding site. The NADPH site is built by Val-279 and Glu-281.

Belongs to the NAD-dependent glycerol-3-phosphate dehydrogenase family.

The protein localises to the cytoplasm. It catalyses the reaction sn-glycerol 3-phosphate + NAD(+) = dihydroxyacetone phosphate + NADH + H(+). The catalysed reaction is sn-glycerol 3-phosphate + NADP(+) = dihydroxyacetone phosphate + NADPH + H(+). It functions in the pathway membrane lipid metabolism; glycerophospholipid metabolism. Functionally, catalyzes the reduction of the glycolytic intermediate dihydroxyacetone phosphate (DHAP) to sn-glycerol 3-phosphate (G3P), the key precursor for phospholipid synthesis. The sequence is that of Glycerol-3-phosphate dehydrogenase [NAD(P)+] from Francisella tularensis subsp. holarctica (strain FTNF002-00 / FTA).